A 267-amino-acid chain; its full sequence is D-aminoacyl-tRNA deacylase (267 aa).

The protein belongs to the DtdA deacylase family. In terms of assembly, monomer. Requires Zn(2+) as cofactor.

It catalyses the reaction a D-aminoacyl-tRNA + H2O = a tRNA + a D-alpha-amino acid + H(+). It carries out the reaction glycyl-tRNA(Ala) + H2O = tRNA(Ala) + glycine + H(+). In terms of biological role, D-aminoacyl-tRNA deacylase with broad substrate specificity. By recycling D-aminoacyl-tRNA to D-amino acids and free tRNA molecules, this enzyme counteracts the toxicity associated with the formation of D-aminoacyl-tRNA entities in vivo. This Methanothrix thermoacetophila (strain DSM 6194 / JCM 14653 / NBRC 101360 / PT) (Methanosaeta thermophila) protein is D-aminoacyl-tRNA deacylase.